The primary structure comprises 182 residues: HGPRTase-like protein 1 (182 aa).

Belongs to the purine/pyrimidine phosphoribosyltransferase family. Archaeal HPRT subfamily.

Functionally, may catalyze a purine salvage reaction, the substrate is unknown. This chain is HGPRTase-like protein 1, found in Haloarcula marismortui (strain ATCC 43049 / DSM 3752 / JCM 8966 / VKM B-1809) (Halobacterium marismortui).